The following is a 383-amino-acid chain: Chitinase-3-like protein 1 (383 aa).

A signal peptide spans 1 to 21 (MGVKASQTGFVVLVLLQCCSA). The GH18 domain maps to 22 to 383 (YKLVCYYTSW…NAIKDALAAT (362 aa)). Cysteines 26 and 51 form a disulfide. A glycan (N-linked (GlcNAc...) asparagine) is linked at Asn-60. Chitin contacts are provided by residues 70–71 (EW), 97–100 (GGWN), Tyr-141, 204–207 (MTYD), and Arg-263. A disulfide bridge links Cys-300 with Cys-364. The interval 324–338 (QWVGYDDQESVKSKV) is important for AKT1 activation and IL8 production. Trp-352 contacts chitin.

It belongs to the glycosyl hydrolase 18 family. As to quaternary structure, monomer. Post-translationally, glycosylated. As to expression, present in activated macrophages, articular chondrocytes, synovial cells as well as in liver. Very low or undetectable expression in non-inflammatory colon. Undetectable in muscle tissues, lung, pancreas, mononuclear cells, or fibroblasts.

The protein resides in the secreted. It localises to the extracellular space. The protein localises to the cytoplasm. Its subcellular location is the perinuclear region. It is found in the endoplasmic reticulum. Its function is as follows. Carbohydrate-binding lectin with a preference for chitin. Has no chitinase activity. May play a role in tissue remodeling and in the capacity of cells to respond to and cope with changes in their environment. Plays a role in T-helper cell type 2 (Th2) inflammatory response and IL-13-induced inflammation, regulating allergen sensitization, inflammatory cell apoptosis, dendritic cell accumulation and M2 macrophage differentiation. Facilitates invasion of pathogenic enteric bacteria into colonic mucosa and lymphoid organs. Mediates activation of AKT1 signaling pathway and subsequent IL8 production in colonic epithelial cells. Regulates antibacterial responses in lung by contributing to macrophage bacterial killing, controlling bacterial dissemination and augmenting host tolerance. Also regulates hyperoxia-induced injury, inflammation and epithelial apoptosis in lung. This is Chitinase-3-like protein 1 (CHI3L1) from Homo sapiens (Human).